The primary structure comprises 290 residues: 4-diphosphocytidyl-2-C-methyl-D-erythritol kinase (290 aa).

Residue lysine 12 is part of the active site. 97–107 (PVASGIGGGSA) provides a ligand contact to ATP. The active site involves aspartate 139.

The protein belongs to the GHMP kinase family. IspE subfamily.

The catalysed reaction is 4-CDP-2-C-methyl-D-erythritol + ATP = 4-CDP-2-C-methyl-D-erythritol 2-phosphate + ADP + H(+). It participates in isoprenoid biosynthesis; isopentenyl diphosphate biosynthesis via DXP pathway; isopentenyl diphosphate from 1-deoxy-D-xylulose 5-phosphate: step 3/6. Catalyzes the phosphorylation of the position 2 hydroxy group of 4-diphosphocytidyl-2C-methyl-D-erythritol. The protein is 4-diphosphocytidyl-2-C-methyl-D-erythritol kinase of Parvibaculum lavamentivorans (strain DS-1 / DSM 13023 / NCIMB 13966).